A 585-amino-acid polypeptide reads, in one-letter code: Mycosin-5 (585 aa).

A signal peptide spans 1–39; the sequence is MQRFGTGSSRSWCGRAGTATIAAVLLASGALTGLPPAYA. Residues 83-521 enclose the Peptidase S8 domain; the sequence is PKYMEMLNLN…YGVVDPVAAL (439 aa). Residues D109 and H141 each act as charge relay system in the active site. The segment covering 163-173 has biased composition (low complexity); sequence VPRRPVTIPTT. Residues 163–269 are disordered; that stretch reads VPRRPVTIPT…PALGPPPDAF (107 aa). Pro residues-rich tracts occupy residues 196–224 and 252–267; these read PAPP…PQPP and NPHP…PPPD. S466 acts as the Charge relay system in catalysis. A helical transmembrane segment spans residues 552-572; the sequence is VPIWVAAGGLAGALLIGGAVF.

It belongs to the peptidase S8 family.

The protein localises to the cell membrane. This is Mycosin-5 from Mycobacterium tuberculosis (strain ATCC 25618 / H37Rv).